The sequence spans 103 residues: Cell division suppressor protein YneA (103 aa).

Positions 36–87 (VKIEVQEGDTLWELADRIKGGKTADKHKFIEWVADKNNLPTSVIKPGDVLIL) constitute a LysM domain.

This sequence belongs to the YneA family.

The protein localises to the cytoplasm. Functionally, inhibits cell division during the SOS response. Affects a later stage of the cell division protein assembly, after the assembly of the Z ring, by probably suppressing recruitment of FtsL and/or DivIC to the division machinery. This is Cell division suppressor protein YneA from Bacillus licheniformis (strain ATCC 14580 / DSM 13 / JCM 2505 / CCUG 7422 / NBRC 12200 / NCIMB 9375 / NCTC 10341 / NRRL NRS-1264 / Gibson 46).